The sequence spans 122 residues: Ribonuclease P protein component (122 aa).

Belongs to the RnpA family. In terms of assembly, consists of a catalytic RNA component (M1 or rnpB) and a protein subunit.

It catalyses the reaction Endonucleolytic cleavage of RNA, removing 5'-extranucleotides from tRNA precursor.. Functionally, RNaseP catalyzes the removal of the 5'-leader sequence from pre-tRNA to produce the mature 5'-terminus. It can also cleave other RNA substrates such as 4.5S RNA. The protein component plays an auxiliary but essential role in vivo by binding to the 5'-leader sequence and broadening the substrate specificity of the ribozyme. In Roseiflexus sp. (strain RS-1), this protein is Ribonuclease P protein component.